A 397-amino-acid polypeptide reads, in one-letter code: uncharacterized protein (397 aa).

A run of 12 helical transmembrane segments spans residues 5–25 (LKIL…LWPL), 43–63 (LVLM…GFLF), 69–89 (FKSI…LVFF), 92–112 (WPAY…VFPA), 131–151 (AIYV…GVVA), 157–177 (YVFL…YFGF), 202–222 (FAAL…YSQW), 233–253 (IGIS…LIVL), 269–289 (LKAQ…MLLT), 293–313 (FPMF…VWPA), 333–353 (FVNS…GVLV), and 360–380 (ALVL…LLYD).

It belongs to the major facilitator superfamily.

Its subcellular location is the cell membrane. This is an uncharacterized protein from Bacillus subtilis (strain 168).